The following is a 178-amino-acid chain: Aspartate carbamoyltransferase regulatory chain (178 aa).

The segment covering 1-15 has biased composition (basic and acidic residues); the sequence is MNDREPNQKESKESV. The tract at residues 1 to 23 is disordered; it reads MNDREPNQKESKESVNDAVPRAR. The Zn(2+) site is built by C133, C138, C159, and C162.

It belongs to the PyrI family. In terms of assembly, contains catalytic and regulatory chains. Zn(2+) is required as a cofactor.

In terms of biological role, involved in allosteric regulation of aspartate carbamoyltransferase. The polypeptide is Aspartate carbamoyltransferase regulatory chain (Haloquadratum walsbyi (strain DSM 16790 / HBSQ001)).